The chain runs to 199 residues: uncharacterized protein (199 aa).

The tract at residues 1–30 is disordered; the sequence is MEDAAAPGRTEGVLERQGAPPAAGQGGALV. A coiled-coil region spans residues 71-101; that stretch reads RANATNKLTVIAEQIQHLQEQARKVLEDAHR.

This is an uncharacterized protein from Homo sapiens (Human).